The primary structure comprises 496 residues: Pre-glycoprotein polyprotein GP complex (496 aa).

Glycine 2 carries the N-myristoyl glycine; by host lipid modification. The Extracellular portion of the chain corresponds to 2 to 17 (GQLISFFQEIPVFLQE). A helical membrane pass occupies residues 18 to 32 (ALNIALVAVSLIAVI). Position 33 (lysine 33) is a topological domain, cytoplasmic. The helical transmembrane segment at 34-53 (GIINLYKSGLFQFIFFLLLA) threads the bilayer. Extracellular segments follow at residues 54-58 (GRSCS) and 59-435 (DGTF…TLVD). Cysteine 57 provides a ligand contact to Zn(2+). 5 N-linked (GlcNAc...) asparagine; by host glycosylation sites follow: asparagine 83, asparagine 95, asparagine 137, asparagine 166, and asparagine 178. 6 disulfides stabilise this stretch: cysteine 92-cysteine 237, cysteine 135-cysteine 164, cysteine 207-cysteine 213, cysteine 282-cysteine 295, cysteine 304-cysteine 313, and cysteine 367-cysteine 388. Residues asparagine 368, asparagine 376, asparagine 393, and asparagine 398 are each glycosylated (N-linked (GlcNAc...) asparagine; by host). A helical membrane pass occupies residues 436–456 (ICFWSTVFFTASLFLHLVGIP). Topologically, residues 457–496 (THRHLKGEACPLPHKLDSFGGCRCGKYPRLRKPTIWHKRH) are cytoplasmic. Zn(2+) contacts are provided by histidine 458, histidine 460, cysteine 466, histidine 470, cysteine 478, cysteine 480, and histidine 496.

Belongs to the arenaviridae GPC protein family. As to quaternary structure, homotetramer; disulfide-linked. Interacts with host TFRC. In terms of assembly, homotetramer. GP2 homotetramers bind through ionic interactions with GP1 homotetramers to form the GP complex together with the stable signal peptide. The GP-C polyprotein interacts with the host protease MBTPS1/SKI-1 resulting in the polyprotein processing. Post-translationally, specific enzymatic cleavages in vivo yield mature proteins. GP-C polyprotein is cleaved in the endoplasmic reticulum by the host protease MBTPS1. Only cleaved glycoprotein is incorporated into virions. In terms of processing, the SSP remains stably associated with the GP complex following cleavage by signal peptidase and plays crucial roles in the trafficking of GP through the secretory pathway. Myristoylation is necessary for GP2-mediated fusion activity.

The protein resides in the virion membrane. It localises to the host endoplasmic reticulum membrane. Its subcellular location is the host Golgi apparatus membrane. The protein localises to the host cell membrane. Functionally, class I viral fusion protein that directs fusion of viral and host endosomal membranes, leading to delivery of the nucleocapsid into the cytoplasm. Membrane fusion is mediated by irreversible conformational changes induced upon acidification in the endosome. In terms of biological role, stable signal peptide (SSP): cleaved and functions as a signal peptide. In addition, it is also retained as the third component of the GP complex. The SSP is required for efficient glycoprotein expression, post-translational maturation cleavage of GP1 and GP2, glycoprotein transport to the cell surface plasma membrane, formation of infectious virus particles, and acid pH-dependent glycoprotein-mediated cell fusion. Its function is as follows. Interacts with the host receptor. Mediates virus attachment to host TFRC. This attachment induces virion internalization predominantly through clathrin-mediated endocytosis. This chain is Pre-glycoprotein polyprotein GP complex, found in Machupo virus (MACV).